Consider the following 565-residue polypeptide: MNVIDHVRDMAAAGLHSNVRLLSSLLLTMSNNNPELFSPPQKYQLLVYHADSLFHDKEYRNAVSKYTMALQQKKALSKTSKVRPSTGNSASTPQSQCLPSEIEVKYKMAECYTMLKQDKDAIAILDGIPSRQRTPKINMMLANLYKKAGQERPSVTSYKEVLRQCPLALDAILGLLSLSVKGAEVASMTMNVIQTVPNLDWLSVWIKAYAFVHTGDNSRAISTICSLEKKSLLRDNVDLLGSLADLYFRAGDNKNSVLKFEQAQMLDPYLIKGMDVYGYLLAREGRLEDVENLGCRLFNISDQHAEPWVVSGCHSFYSKRYSRALYLGAKAIQLNSNSVQALLLKGAALRNMGRVQEAIIHFREAIRLAPCRLDCYEGLIECYLASNSIREAMVMANNVYKTLGANAQTLTLLATVCLEDPVTQEKAKTLLDKALTQRPDYIKAVVKKAELLSREQKYEDGIALLRNALANQSDCVLHRILGDFLVAVNEYQEAMDQYSIALSLDPNDQKSLEGMQKMEKEESPTDATQEEDVDDMEGSGEEGDLEGSDSEAAQWADQEQWFGMQ.

TPR repeat units follow at residues 101 to 134, 169 to 202, 203 to 236, 237 to 270, 339 to 372, 373 to 406, 407 to 441, 442 to 474, 475 to 508, and 509 to 531; these read EIEV…RQRT, LDAI…LDWL, SVWI…LRDN, VDLL…DPYL, VQAL…APCR, LDCY…LGAN, AQTL…RPDY, IKAV…NQSD, CVLH…DPND, and QKSL…TQEE. N6-acetyllysine is present on lysine 229. Residues 513 to 523 show a composition bias toward basic and acidic residues; sequence EGMQKMEKEES. The tract at residues 513 to 565 is disordered; the sequence is EGMQKMEKEESPTDATQEEDVDDMEGSGEEGDLEGSDSEAAQWADQEQWFGMQ. Residues 528–549 show a composition bias toward acidic residues; that stretch reads TQEEDVDDMEGSGEEGDLEGSD.

Belongs to the APC7 family. In terms of assembly, V-shaped homodimer. The mammalian APC/C is composed at least of 14 distinct subunits ANAPC1, ANAPC2, CDC27/APC3, ANAPC4, ANAPC5, CDC16/APC6, ANAPC7, CDC23/APC8, ANAPC10, ANAPC11, CDC26/APC12, ANAPC13, ANAPC15 and ANAPC16 that assemble into a complex of at least 19 chains with a combined molecular mass of around 1.2 MDa; APC/C interacts with FZR1 and FBXO5.

It localises to the cytoplasm. It is found in the cytoskeleton. The protein localises to the nucleus. The protein resides in the spindle. Its pathway is protein modification; protein ubiquitination. Its function is as follows. Component of the anaphase promoting complex/cyclosome (APC/C), a cell cycle-regulated E3 ubiquitin ligase that controls progression through mitosis and the G1 phase of the cell cycle. The APC/C complex acts by mediating ubiquitination and subsequent degradation of target proteins: it mainly mediates the formation of 'Lys-11'-linked polyubiquitin chains and, to a lower extent, the formation of 'Lys-48'- and 'Lys-63'-linked polyubiquitin chains. The APC/C complex catalyzes assembly of branched 'Lys-11'-/'Lys-48'-linked branched ubiquitin chains on target proteins. APC7 is not required for the assembly of the APC/C complex, but has an enzyme-substrate adapter activity mediating the processive ubiquitination of specific substrates. Involved in brain development through the specific ubiquitination and clearance of MKI67 from constitutive heterochromatin after neuronal progenitors exit mitosis. The protein is Anaphase-promoting complex subunit 7 of Homo sapiens (Human).